The chain runs to 573 residues: Anti-Muellerian hormone type-2 receptor (573 aa).

Positions 1-17 (MLGSLGLWALLPTAVEA) are cleaved as a signal peptide. Residues 18–149 (PPNRRTCVFF…APGESIWMAL (132 aa)) are Extracellular-facing. Disulfide bonds link Cys-55–Cys-79 and Cys-92–Cys-109. Asn-66 is a glycosylation site (N-linked (GlcNAc...) asparagine). A glycan (N-linked (GlcNAc...) asparagine) is linked at Asn-119. The helical transmembrane segment at 150–170 (VLLGLFLLLLLLLGSIILALL) threads the bilayer. Residues 171-573 (QRKNYRVRGE…PQPACTLSPV (403 aa)) lie on the Cytoplasmic side of the membrane. One can recognise a Protein kinase domain in the interval 203 to 518 (LCFSQVIREG…AHPQESHPFP (316 aa)). ATP is bound by residues 209 to 217 (IREGGHAVV) and Lys-230. The active-site Proton acceptor is Asp-333.

Belongs to the protein kinase superfamily. TKL Ser/Thr protein kinase family. TGFB receptor subfamily. In terms of assembly, interacts with type I receptor ACVR1. Requires Mg(2+) as cofactor. Mn(2+) is required as a cofactor.

Its subcellular location is the membrane. The enzyme catalyses L-threonyl-[receptor-protein] + ATP = O-phospho-L-threonyl-[receptor-protein] + ADP + H(+). It catalyses the reaction L-seryl-[receptor-protein] + ATP = O-phospho-L-seryl-[receptor-protein] + ADP + H(+). In terms of biological role, on ligand binding, forms a receptor complex consisting of two type II and two type I transmembrane serine/threonine kinases. Type II receptors phosphorylate and activate type I receptors which autophosphorylate, then bind and activate SMAD transcriptional regulators. Receptor for anti-Muellerian hormone. In Homo sapiens (Human), this protein is Anti-Muellerian hormone type-2 receptor (AMHR2).